The sequence spans 1061 residues: Transmembrane protease serine 9 (1061 aa).

The Cytoplasmic portion of the chain corresponds to 3–31 (PAAPDLQPVPEVTKGVPVPTPDSGCCRAA). The chain crosses the membrane as a helical span at residues 32 to 52 (VTTVVAISVASLTLGVLSAFL). The Extracellular segment spans residues 53-1061 (SAQGVQVEHT…LGWIGQNIRE (1009 aa)). The LDL-receptor class A domain maps to 155–192 (HCPGNAFSCQNSQCVSKENPECDDRVDCSDGSDEAQCD). 4 cysteine pairs are disulfide-bonded: C156–C168, C163–C182, C176–C191, and C230–C246. The 234-residue stretch at 205–438 (IVGGAEAAPG…LRDWILEVTS (234 aa)) folds into the Peptidase S1 1 domain. Active-site charge relay system residues include H245 and D294. Intrachain disulfides connect C328-C395, C360-C374, and C385-C414. The active-site Charge relay system is S389. The segment at 443–499 (PVVPTEAPAPITPSTPWPTSPESRVPNTTAKPTVAPTPAPLHPSTAAKPQECGARPA) is disordered. Positions 452–461 (PITPSTPWPT) are enriched in pro residues. Residues 462-476 (SPESRVPNTTAKPTV) show a composition bias toward low complexity. N469 carries N-linked (GlcNAc...) asparagine glycosylation. In terms of domain architecture, Peptidase S1 2 spans 506–738 (IVGGISAVSG…LKDWILKAMS (233 aa)). C531 and C547 are oxidised to a cystine. H546 (charge relay system) is an active-site residue. The N-linked (GlcNAc...) asparagine glycan is linked to N549. D594 acts as the Charge relay system in catalysis. 3 cysteine pairs are disulfide-bonded: C628-C695, C660-C674, and C685-C714. N-linked (GlcNAc...) asparagine glycans are attached at residues N640 and N665. The active-site Charge relay system is the S689. The segment covering 740–752 (DPSSTAHPHTSST) has biased composition (low complexity). Disordered regions lie at residues 740-771 (DPSSTAHPHTSSTRLIPSQPPTTTAAGLIPEA) and 790-810 (LNTTLSARSTTTRRQTPAPGT). An N-linked (GlcNAc...) asparagine glycan is attached at N791. Positions 792 to 808 (TTLSARSTTTRRQTPAP) are enriched in low complexity. A Peptidase S1 3 domain is found at 830-1060 (IVGGSAASLG…VLGWIGQNIR (231 aa)). 4 cysteine pairs are disulfide-bonded: C856–C872, C951–C1017, C982–C996, and C1007–C1036.

This sequence belongs to the peptidase S1 family. In terms of processing, proteolytically cleaved to generate 3 independent serine protease chains. The cleaved chains may remain attached to the membrane thanks to disulfide bonds. It is unclear whether cleavage always takes place.

The protein resides in the cell membrane. Its activity is regulated as follows. Inhibited by serine protease inhibitors PMSF and 4-(2-aminoethyl)benzenesulfonyl fluoride, but not by EDTA. Functionally, serase-1 and serase-2 are serine proteases that hydrolyze the peptides N-t-Boc-Gln-Ala-Arg-AMC and N-t-Boc-Gln-Gly-Arg-AMC. In contrast, N-t-Boc-Ala-Phe-Lys-AMC and N-t-Boc-Ala-Pro-Ala-AMC are not significantly hydrolyzed. In Rattus norvegicus (Rat), this protein is Transmembrane protease serine 9 (Tmprss9).